A 543-amino-acid polypeptide reads, in one-letter code: Cytochrome P450 1B1 (543 aa).

Position 470 (C470) interacts with heme.

Belongs to the cytochrome P450 family. Requires heme as cofactor. Expressed in heart, brain, lung, skeletal muscle, kidney, spleen, thymus, prostate, testis, ovary, small intestine, colon, and peripheral blood leukocytes. Expressed in retinal endothelial cells and umbilical vein endothelial cells (at protein level).

The protein resides in the endoplasmic reticulum membrane. Its subcellular location is the microsome membrane. The protein localises to the mitochondrion. The catalysed reaction is an organic molecule + reduced [NADPH--hemoprotein reductase] + O2 = an alcohol + oxidized [NADPH--hemoprotein reductase] + H2O + H(+). The enzyme catalyses 17beta-estradiol + reduced [NADPH--hemoprotein reductase] + O2 = 2-hydroxy-17beta-estradiol + oxidized [NADPH--hemoprotein reductase] + H2O + H(+). It catalyses the reaction 17beta-estradiol + reduced [NADPH--hemoprotein reductase] + O2 = 4-hydroxy-17beta-estradiol + oxidized [NADPH--hemoprotein reductase] + H2O + H(+). It carries out the reaction estrone + reduced [NADPH--hemoprotein reductase] + O2 = 2-hydroxyestrone + oxidized [NADPH--hemoprotein reductase] + H2O + H(+). The catalysed reaction is estrone + reduced [NADPH--hemoprotein reductase] + O2 = 4-hydroxyestrone + oxidized [NADPH--hemoprotein reductase] + H2O + H(+). The enzyme catalyses testosterone + reduced [NADPH--hemoprotein reductase] + O2 = 6beta,17beta-dihydroxyandrost-4-en-3-one + oxidized [NADPH--hemoprotein reductase] + H2O + H(+). It catalyses the reaction progesterone + reduced [NADPH--hemoprotein reductase] + O2 = 6beta-hydroxyprogesterone + oxidized [NADPH--hemoprotein reductase] + H2O + H(+). It carries out the reaction progesterone + reduced [NADPH--hemoprotein reductase] + O2 = 16alpha-hydroxyprogesterone + oxidized [NADPH--hemoprotein reductase] + H2O + H(+). The catalysed reaction is all-trans-retinol + reduced [NADPH--hemoprotein reductase] + O2 = all-trans-retinal + oxidized [NADPH--hemoprotein reductase] + 2 H2O + H(+). The enzyme catalyses all-trans-retinal + reduced [NADPH--hemoprotein reductase] + O2 = all-trans-retinoate + oxidized [NADPH--hemoprotein reductase] + H2O + 2 H(+). It catalyses the reaction (5Z,8Z,11Z,14Z)-eicosatetraenoate + reduced [NADPH--hemoprotein reductase] + O2 = (8R,9S)-epoxy-(5Z,11Z,14Z)-eicosatrienoate + oxidized [NADPH--hemoprotein reductase] + H2O + H(+). It carries out the reaction (5Z,8Z,11Z,14Z)-eicosatetraenoate + reduced [NADPH--hemoprotein reductase] + O2 = (11R,12S)-epoxy-(5Z,8Z,14Z)-eicosatrienoate + oxidized [NADPH--hemoprotein reductase] + H2O + H(+). The catalysed reaction is (5Z,8Z,11Z,14Z)-eicosatetraenoate + reduced [NADPH--hemoprotein reductase] + O2 = (11S,12R)-epoxy-(5Z,8Z,14Z)-eicosatrienoate + oxidized [NADPH--hemoprotein reductase] + H2O + H(+). The enzyme catalyses (5Z,8Z,11Z,14Z)-eicosatetraenoate + reduced [NADPH--hemoprotein reductase] + O2 = (14R,15S)-epoxy-(5Z,8Z,11Z)-eicosatrienoate + oxidized [NADPH--hemoprotein reductase] + H2O + H(+). It catalyses the reaction (5S)-hydroperoxy-(6E,8Z,11Z,14Z)-eicosatetraenoate = 5-oxo-(6E,8Z,11Z,14Z)-eicosatetraenoate + H2O. It carries out the reaction (12S)-hydroperoxy-(5Z,8Z,10E,14Z)-eicosatetraenoate = 12-oxo-(5Z,8Z,10E,14Z)-eicosatetraenoate + H2O. The catalysed reaction is (13S)-hydroperoxy-(9Z,11E)-octadecadienoate = 13-oxo-(9Z,11E)-octadecadienoate + H2O. The enzyme catalyses (15S)-hydroperoxy-(5Z,8Z,11Z,13E)-eicosatetraenoate = 15-oxo-(5Z,8Z,11Z,13E)-eicosatetraenoate + H2O. Its pathway is steroid hormone biosynthesis. The protein operates within cofactor metabolism; retinol metabolism. It functions in the pathway lipid metabolism; arachidonate metabolism. With respect to regulation, enzyme activity is increased by liposomes containing anionic phospholipids, phosphatidic acid and cardiolipin. Inhibited by naringenin with an IC(50) of 5 uM. Enzyme activity is increased by cytochrome b5. In terms of biological role, a cytochrome P450 monooxygenase involved in the metabolism of various endogenous substrates, including fatty acids, steroid hormones and vitamins. Mechanistically, uses molecular oxygen inserting one oxygen atom into a substrate, and reducing the second into a water molecule, with two electrons provided by NADPH via cytochrome P450 reductase (NADPH--hemoprotein reductase). Exhibits catalytic activity for the formation of hydroxyestrogens from estrone (E1) and 17beta-estradiol (E2), namely 2- and 4-hydroxy E1 and E2. Displays a predominant hydroxylase activity toward E2 at the C-4 position. Metabolizes testosterone and progesterone to B or D ring hydroxylated metabolites. May act as a major enzyme for all-trans retinoic acid biosynthesis in extrahepatic tissues. Catalyzes two successive oxidative transformation of all-trans retinol to all-trans retinal and then to the active form all-trans retinoic acid. Catalyzes the epoxidation of double bonds of certain PUFA. Converts arachidonic acid toward epoxyeicosatrienoic acid (EpETrE) regioisomers, 8,9-, 11,12-, and 14,15- EpETrE, that function as lipid mediators in the vascular system. Additionally, displays dehydratase activity toward oxygenated eicosanoids hydroperoxyeicosatetraenoates (HpETEs). This activity is independent of cytochrome P450 reductase, NADPH, and O2. Also involved in the oxidative metabolism of xenobiotics, particularly converting polycyclic aromatic hydrocarbons and heterocyclic aryl amines procarcinogens to DNA-damaging products. Plays an important role in retinal vascular development. Under hyperoxic O2 conditions, promotes retinal angiogenesis and capillary morphogenesis, likely by metabolizing the oxygenated products generated during the oxidative stress. Also, contributes to oxidative homeostasis and ultrastructural organization and function of trabecular meshwork tissue through modulation of POSTN expression. The protein is Cytochrome P450 1B1 of Homo sapiens (Human).